We begin with the raw amino-acid sequence, 275 residues long: NAD kinase (275 aa).

The active-site Proton acceptor is D66. NAD(+)-binding positions include 66 to 67, H71, 135 to 136, K146, R163, D165, and 176 to 181; these read DG, NE, and TAYAMS.

It belongs to the NAD kinase family. Requires a divalent metal cation as cofactor.

The protein localises to the cytoplasm. The catalysed reaction is NAD(+) + ATP = ADP + NADP(+) + H(+). Its function is as follows. Involved in the regulation of the intracellular balance of NAD and NADP, and is a key enzyme in the biosynthesis of NADP. Catalyzes specifically the phosphorylation on 2'-hydroxyl of the adenosine moiety of NAD to yield NADP. The sequence is that of NAD kinase from Methanosphaera stadtmanae (strain ATCC 43021 / DSM 3091 / JCM 11832 / MCB-3).